Here is a 664-residue protein sequence, read N- to C-terminus: PAN2-PAN3 deadenylation complex subunit PAN3 (664 aa).

Disordered stretches follow at residues 1-27 (MATT…GREN) and 54-134 (DPHK…PGTM). Residues 27 to 56 (NAKDTLCRNVTIYGRCRYEDKGCAFNHDPH) form a C3H1-type zinc finger. The span at 74–96 (DSPSFTPSILSSNGSSPTSQSAT) shows a compositional bias: polar residues. The segment covering 115 to 131 (PRSISSRSNSSTPTTRP) has biased composition (low complexity). The tract at residues 265–525 (QTLPNTQLPA…NIDIFITGIS (261 aa)) is pseudokinase domain. Residues arginine 317, 366-373 (DYHPLSKT), and 425-426 (SK) contribute to the ATP site. Residues 526 to 564 (STLMSTFDSALHLDDQLTSDLSRELENGRLVRLMTKLNF) are a coiled coil. The interval 565–664 (VNERPEYEHD…LKPSASRRLH (100 aa)) is knob domain.

The protein belongs to the protein kinase superfamily. PAN3 family. Homodimer. Forms a heterotrimer with a catalytic subunit pan2 to form the poly(A)-nuclease (PAN) deadenylation complex. Interacts (via PAM-2 motif) with poly(A)-binding protein pab1 (via PABC domain), conferring substrate specificity of the enzyme complex.

The protein localises to the cytoplasm. Functionally, regulatory subunit of the poly(A)-nuclease (PAN) deadenylation complex, one of two cytoplasmic mRNA deadenylases involved in mRNA turnover. PAN specifically shortens poly(A) tails of RNA and the activity is stimulated by poly(A)-binding protein pab1. PAN deadenylation is followed by rapid degradation of the shortened mRNA tails by the CCR4-NOT complex. Deadenylated mRNAs are then degraded by two alternative mechanisms, namely exosome-mediated 3'-5' exonucleolytic degradation, or deadenylation-dependent mRNA decaping and subsequent 5'-3' exonucleolytic degradation by xrn1. May also be involved in post-transcriptional maturation of mRNA poly(A) tails. pan3 acts as a positive regulator for PAN activity, recruiting the catalytic subunit pan2 to mRNA via its interaction with RNA and with pab1. The protein is PAN2-PAN3 deadenylation complex subunit PAN3 of Aspergillus niger (strain ATCC MYA-4892 / CBS 513.88 / FGSC A1513).